Consider the following 138-residue polypeptide: Large ribosomal subunit protein bL17 (138 aa).

The protein belongs to the bacterial ribosomal protein bL17 family. Part of the 50S ribosomal subunit. Contacts protein L32.

This chain is Large ribosomal subunit protein bL17, found in Halorhodospira halophila (strain DSM 244 / SL1) (Ectothiorhodospira halophila (strain DSM 244 / SL1)).